The chain runs to 157 residues: Homeobox protein DBX2 (157 aa).

Positions 9–68 (GILRRAVFSEDQRKALEKMFQKQKYISKTDRKKLAINLGLKESQVKIWFQNRRMKWRNSK) form a DNA-binding region, homeobox. Positions 105-157 (SQEQTSPRWKEKSPGNSERLTSTQPPPRANSSQSPLYLYPDHDTANKAVTSSD) are disordered. The segment covering 118 to 139 (PGNSERLTSTQPPPRANSSQSP) has biased composition (polar residues).

The protein belongs to the H2.0 homeobox family. As to expression, localized to the central nervous system during embryogenesis. It is found restricted to the rostro-caudal and dorso-ventral regions of the hindbrain. In the ventricular zone of the spinal cord, it localizes to the dorsal part of the basal plate. In the adult, it is detected in ovary.

The protein localises to the nucleus. Functionally, appears to perform a very early function in establishing the identity of a subset of cells that originate in the region of the ventricular zone in the developing spinal cord and in the hindbrain. The sequence is that of Homeobox protein DBX2 (DBX2) from Gallus gallus (Chicken).